Here is a 134-residue protein sequence, read N- to C-terminus: Waprin-Phi1 (134 aa).

A signal peptide spans 1–23 (MTLRRGSCPLLLFSLVGLLTTCA). 2 consecutive WAP domains span residues 36-82 (VAEK…SCQI) and 83-133 (PDEK…TTAR). Intrachain disulfides connect Cys-43-Cys-72, Cys-55-Cys-76, Cys-59-Cys-71, Cys-65-Cys-80, Cys-90-Cys-120, Cys-103-Cys-124, Cys-107-Cys-119, and Cys-113-Cys-129.

This sequence belongs to the venom waprin family. As to expression, expressed by the venom gland.

The protein resides in the secreted. Damages membranes of susceptible bacteria. Has no hemolytic activity. Not toxic to mice. Does not inhibit the proteinases elastase and cathepsin G. This chain is Waprin-Phi1, found in Philodryas olfersii (Green snake).